The primary structure comprises 318 residues: Taste receptor type 2 member 60 (318 aa).

Residues 1 to 7 are Extracellular-facing; sequence MNGDHMV. A helical transmembrane segment spans residues 8–28; the sequence is LGSSVTDQKAIILVIILLLLC. Over 29–40 the chain is Cytoplasmic; it reads LVAIAGNGFITA. Residues 41-61 form a helical membrane-spanning segment; it reads ALGVEWVLRGTLLPCDKLLVS. Topologically, residues 62-88 are extracellular; the sequence is LRASRFCLQWVVMGKTIYVLLYPTAFP. Residues 89–109 form a helical membrane-spanning segment; that stretch reads YNPVLQFLAFQWDFLNAATLW. The Cytoplasmic segment spans residues 110–128; that stretch reads FSSWLSVFYCVKIATFTHP. The chain crosses the membrane as a helical span at residues 129 to 149; sequence VFLWLKHKLSEWVPWMFFSSV. Over 150 to 183 the chain is Extracellular; sequence GLSSFTTILFFIGNHSIYQNYLRNHLQPWNVTGN. Asn163 and Asn179 each carry an N-linked (GlcNAc...) asparagine glycan. A helical transmembrane segment spans residues 184-204; that stretch reads SIWSYCEKFYLFPVKMITWTM. Over 205-234 the chain is Cytoplasmic; it reads PTAVFFICMILLITSLGRHMEKALLTTSGF. Residues 235 to 255 traverse the membrane as a helical segment; the sequence is REPSVQAHVKALLALLSLAML. At 256–264 the chain is on the extracellular side; the sequence is FISYFLSLV. Residues 265-285 traverse the membrane as a helical segment; the sequence is LSAAGIFPPLDFKFWVGESVI. The Cytoplasmic portion of the chain corresponds to 286-318; it reads YLCAGVHPIILLFSNRRLRAVLERCRSSRCRTP.

Belongs to the G-protein coupled receptor T2R family.

The protein localises to the membrane. Functionally, receptor that may play a role in the perception of bitterness and is gustducin-linked. May play a role in sensing the chemical composition of the gastrointestinal content. The activity of this receptor may stimulate alpha gustducin, mediate PLC-beta-2 activation and lead to the gating of TRPM5. This Macaca mulatta (Rhesus macaque) protein is Taste receptor type 2 member 60 (TAS2R60).